A 126-amino-acid chain; its full sequence is Ribulose bisphosphate carboxylase small subunit, chloroplastic 1 (126 aa).

It belongs to the RuBisCO small chain family. As to quaternary structure, heterohexadecamer of 8 large and 8 small subunits.

It is found in the plastid. The protein localises to the chloroplast. Functionally, ruBisCO catalyzes two reactions: the carboxylation of D-ribulose 1,5-bisphosphate, the primary event in carbon dioxide fixation, as well as the oxidative fragmentation of the pentose substrate. Both reactions occur simultaneously and in competition at the same active site. Although the small subunit is not catalytic it is essential for maximal activity. This chain is Ribulose bisphosphate carboxylase small subunit, chloroplastic 1, found in Acetabularia peniculus (Green alga).